Reading from the N-terminus, the 315-residue chain is Replication factor C small subunit (315 aa).

43–50 (GSPGVGKT) lines the ATP pocket.

Belongs to the activator 1 small subunits family. RfcS subfamily. In terms of assembly, heteromultimer composed of small subunits (RfcS) and large subunits (RfcL).

In terms of biological role, part of the RFC clamp loader complex which loads the PCNA sliding clamp onto DNA. In Methanococcus maripaludis (strain C5 / ATCC BAA-1333), this protein is Replication factor C small subunit.